The primary structure comprises 262 residues: LysM and putative peptidoglycan-binding domain-containing protein 3 (262 aa).

Residues 1–218 (MSGRIPNHGY…PYHGADWSLG (218 aa)) lie on the Extracellular side of the membrane. The LysM domain occupies 70 to 114 (ISRDICEGDTLNSIALQYCCTVADLKRANNFLNEQDFFALRTIKI). The chain crosses the membrane as a helical span at residues 219–239 (WWTAVAIMVFVGIITPLFYFL). At 240 to 262 (YYEVLMKVNTSHTLNSIEKSGPS) the chain is on the cytoplasmic side.

It is found in the cell membrane. The protein resides in the golgi apparatus. Functionally, essential for Golgi structural integrity. This chain is LysM and putative peptidoglycan-binding domain-containing protein 3 (lysmd3), found in Xenopus tropicalis (Western clawed frog).